The chain runs to 444 residues: Homogentisate 1,2-dioxygenase (444 aa).

Histidine 298 (proton acceptor) is an active-site residue. Fe cation is bound by residues histidine 341 and glutamate 347. Homogentisate is bound by residues tyrosine 356 and histidine 377. Residue histidine 377 participates in Fe cation binding.

Belongs to the homogentisate dioxygenase family. Hexamer; dimer of trimers. Requires Fe cation as cofactor.

It catalyses the reaction homogentisate + O2 = 4-maleylacetoacetate + H(+). Its pathway is amino-acid degradation; L-phenylalanine degradation; acetoacetate and fumarate from L-phenylalanine: step 4/6. Its function is as follows. Involved in the catabolism of homogentisate (2,5-dihydroxyphenylacetate or 2,5-OH-PhAc), a central intermediate in the degradation of phenylalanine and tyrosine. Catalyzes the oxidative ring cleavage of the aromatic ring of homogentisate to yield maleylacetoacetate. This chain is Homogentisate 1,2-dioxygenase, found in Burkholderia cenocepacia (strain ATCC BAA-245 / DSM 16553 / LMG 16656 / NCTC 13227 / J2315 / CF5610) (Burkholderia cepacia (strain J2315)).